A 33-amino-acid chain; its full sequence is Cytochrome b6-f complex subunit 8 (33 aa).

Residues 2–22 (LFTLAWASLAAVFSFSIAMVV) form a helical membrane-spanning segment.

This sequence belongs to the PetN family. The 4 large subunits of the cytochrome b6-f complex are cytochrome b6, subunit IV (17 kDa polypeptide, PetD), cytochrome f and the Rieske protein, while the 4 small subunits are PetG, PetL, PetM and PetN. The complex functions as a dimer.

The protein localises to the cellular thylakoid membrane. In terms of biological role, component of the cytochrome b6-f complex, which mediates electron transfer between photosystem II (PSII) and photosystem I (PSI), cyclic electron flow around PSI, and state transitions. This is Cytochrome b6-f complex subunit 8 from Prochlorococcus marinus (strain MIT 9303).